Consider the following 855-residue polypeptide: DNA mismatch repair protein MutS (855 aa).

Residue 616-623 coordinates ATP; it reads GPNMGGKS.

This sequence belongs to the DNA mismatch repair MutS family.

Functionally, this protein is involved in the repair of mismatches in DNA. It is possible that it carries out the mismatch recognition step. This protein has a weak ATPase activity. The sequence is that of DNA mismatch repair protein MutS from Salmonella schwarzengrund (strain CVM19633).